Here is a 578-residue protein sequence, read N- to C-terminus: ATP-dependent RNA helicase dbp3 (578 aa).

Positions 59–69 (KRSADEEASVK) are enriched in basic and acidic residues. The segment at 59–117 (KRSADEEASVKRKEKKSKHEHKKHKKDKPSADKDRISKKDKKKSKKGKSKTKEESIEIN) is disordered. Positions 70-85 (RKEKKSKHEHKKHKKD) are enriched in basic residues. Residues 86–95 (KPSADKDRIS) show a composition bias toward basic and acidic residues. Over residues 96 to 107 (KKDKKKSKKGKS) the composition is skewed to basic residues. Positions 167 to 193 (LQFDELDVSAKLREGLKNYKEPTPIQA) match the Q motif motif. In terms of domain architecture, Helicase ATP-binding spans 196-373 (WPYLLAGRDV…ATFLKDPVKI (178 aa)). 209-216 (AETGSGKT) is an ATP binding site. The short motif at 316–319 (DEAD) is the DEAD box element. Residues 402–550 (MLDNLLRKHL…DIPEGLFKFG (149 aa)) enclose the Helicase C-terminal domain.

It belongs to the DEAD box helicase family. DDX5/DBP2 subfamily.

The protein localises to the nucleus. The protein resides in the nucleolus. It catalyses the reaction ATP + H2O = ADP + phosphate + H(+). Its function is as follows. ATP-dependent RNA helicase required for 60S ribosomal subunit synthesis. Involved in efficient pre-rRNA processing, predominantly at site A3, which is necessary for the normal formation of 25S and 5.8S rRNAs. This Schizosaccharomyces pombe (strain 972 / ATCC 24843) (Fission yeast) protein is ATP-dependent RNA helicase dbp3 (dbp3).